A 318-amino-acid chain; its full sequence is Putative 2-hydroxyacid dehydrogenase SSP0606 (318 aa).

Residues 156-157 (EI), 235-237 (ASR), and aspartate 261 each bind NAD(+). The active site involves arginine 237. Glutamate 266 is an active-site residue. The active-site Proton donor is the histidine 284. Position 284 to 287 (284 to 287 (HIGN)) interacts with NAD(+).

It belongs to the D-isomer specific 2-hydroxyacid dehydrogenase family.

The polypeptide is Putative 2-hydroxyacid dehydrogenase SSP0606 (Staphylococcus saprophyticus subsp. saprophyticus (strain ATCC 15305 / DSM 20229 / NCIMB 8711 / NCTC 7292 / S-41)).